The primary structure comprises 179 residues: Adenine phosphoribosyltransferase (179 aa).

This sequence belongs to the purine/pyrimidine phosphoribosyltransferase family. As to quaternary structure, homodimer.

The protein resides in the cytoplasm. It catalyses the reaction AMP + diphosphate = 5-phospho-alpha-D-ribose 1-diphosphate + adenine. It participates in purine metabolism; AMP biosynthesis via salvage pathway; AMP from adenine: step 1/1. Functionally, catalyzes a salvage reaction resulting in the formation of AMP, that is energically less costly than de novo synthesis. The chain is Adenine phosphoribosyltransferase from Actinobacillus pleuropneumoniae serotype 5b (strain L20).